A 156-amino-acid chain; its full sequence is Small ribosomal subunit protein uS7 (156 aa).

The protein belongs to the universal ribosomal protein uS7 family. Part of the 30S ribosomal subunit. Contacts proteins S9 and S11.

One of the primary rRNA binding proteins, it binds directly to 16S rRNA where it nucleates assembly of the head domain of the 30S subunit. Is located at the subunit interface close to the decoding center, probably blocks exit of the E-site tRNA. The sequence is that of Small ribosomal subunit protein uS7 from Brucella melitensis biotype 1 (strain ATCC 23456 / CCUG 17765 / NCTC 10094 / 16M).